The sequence spans 449 residues: Delta(8)-fatty-acid desaturase 1 (449 aa).

Residues 7–91 (KKYITNEDLK…IRDFQVSEVS (85 aa)) form the Cytochrome b5 heme-binding domain. The heme site is built by His-42 and His-65. The next 2 membrane-spanning stretches (helical) occupy residues 113–133 (VTLYTLAFVAAMFLGVLYGVL) and 138–158 (VFAHQIAAALLGLLWIQSAYI). The Histidine box-1 motif lies at 160 to 164 (HDSGH). Residues 173–195 (YNRFAQLLSGNCLTGISIAWWKW) form a helical membrane-spanning segment. The Histidine box-2 motif lies at 197–201 (HNAHH). 3 helical membrane-spanning segments follow: residues 255-275 (YYPVMCFGRINLFIQTFLLLF), 284-304 (ALNFAGILVFWTWFPLLVSCL), and 311-331 (FFFVFTSFTVTALQHIQFTLN). A Histidine box-3 motif is present at residues 374–378 (QLEHH).

The protein belongs to the fatty acid desaturase type 1 family. The cofactor is Fe cation. In terms of tissue distribution, highly expressed in flowers. Expressed in roots, leaves, stems and siliques.

The protein localises to the endoplasmic reticulum membrane. It catalyses the reaction an N-acyl-(4R)-4-hydroxysphinganine + 2 Fe(II)-[cytochrome b5] + O2 + 2 H(+) = a (4R,8E)-4-hydroxysphingenine ceramide + 2 Fe(III)-[cytochrome b5] + 2 H2O. The catalysed reaction is an N-acyl-(4R)-4-hydroxysphinganine + 2 Fe(II)-[cytochrome b5] + O2 + 2 H(+) = a (4R,8Z)-4-hydroxysphing-8-enine ceramide + 2 Fe(III)-[cytochrome b5] + 2 H2O. Its function is as follows. Plays a major role as delta(8)-fatty-acid desaturase which introduces a double bond at the 8-position in the long-chain base (LCB) of ceramides with or without a hydroxy group at the 4-position. The enzyme produces both the 8E and 8Z isomers (in a 4:1 ratio). This structural modification contributes to the quantitative partitioning of ceramides between the two major sphingolipid classes, glucosylceramides and glycosylinositolphosphoryl ceramides. Sphingolipids are important membrane components involved in environmental stress responses, such as resistance to chilling, and act as cell signaling molecules. This is Delta(8)-fatty-acid desaturase 1 (SLD1) from Arabidopsis thaliana (Mouse-ear cress).